The sequence spans 209 residues: Redox-sensing transcriptional repressor Rex (209 aa).

Positions Val16 to Phe55 form a DNA-binding region, H-T-H motif. Gly90 to Gly95 is a binding site for NAD(+).

Belongs to the transcriptional regulatory Rex family. As to quaternary structure, homodimer.

The protein resides in the cytoplasm. Modulates transcription in response to changes in cellular NADH/NAD(+) redox state. In Maridesulfovibrio salexigens (strain ATCC 14822 / DSM 2638 / NCIMB 8403 / VKM B-1763) (Desulfovibrio salexigens), this protein is Redox-sensing transcriptional repressor Rex.